Reading from the N-terminus, the 366-residue chain is Sperm equatorial segment protein 1 (366 aa).

The N-terminal stretch at Met-1–Pro-18 is a signal peptide. The N-linked (GlcNAc...) asparagine glycan is linked to Asn-129. The segment at Pro-139–Asn-204 is disordered. Over residues Asp-144 to Glu-157 the composition is skewed to acidic residues. The span at Ala-165–Gly-189 shows a compositional bias: polar residues.

Belongs to the SPESP1 family. Glycosylated. In testis there are two predominant forms of 77- and 67-kDa and a form of 47-kDa, whereas in epididymal sperm from caput, corpus, and cauda there are two forms of 47- and 43-kDa. Testis forms contain complex carbohydrate residues. Epididymal sperm forms are N-glycosylated. Then undergoes significant glycosylation in the testis and that the majority of these glycoconjugates are removed by the time sperm reach the caput epididymis.

The protein localises to the cytoplasmic vesicle. It is found in the secretory vesicle. The protein resides in the acrosome. Functionally, involved in fertilization ability of sperm. The protein is Sperm equatorial segment protein 1 of Bos taurus (Bovine).